Reading from the N-terminus, the 1052-residue chain is F-box/WD repeat-containing protein 10 (1052 aa).

One copy of the WD 1 repeat lies at 169-206; that stretch reads GLNQDITDVCFSPEKDHSSKSATSQVYWTAKTQHTSLP. The region spanning 276 to 323 is the F-box domain; sequence DFIRYLPIHLSKYILRMLDRHTLNKCASVSQHWAAMAQQVKMDLSAHG. WD repeat units follow at residues 409 to 447, 451 to 490, 493 to 532, 534 to 569, 572 to 609, and 611 to 652; these read SDTWDQNRVIHYSGGDLIAVSSNRKIHLLDIIQVKAIPV, GHAGSVRALFLCEEENFLLSGSYDLSIRYWDLKSGVCTRI, GHQGTITCMDLCKNRLVSGGRDCQVKVWDVDTGKCLKTFR, KDPILATRINDTYIVSSCERGLVKVWHIAMAQLVKT, GHEGAVKCLFFDQWHLLSGSTDGLVMAWSMVGKYERCL, and AFKH…KVLK. Residues 690–719 adopt a coiled-coil conformation; that stretch reads YAVEKTKQKKNKEKEEEKEENSLMEILSKC. A disordered region spans residues 766-805; it reads LQSQGKSKSPRRDADDVEKAQKQGQLETPGKLPSHPKKKS. The segment covering 775–786 has biased composition (basic and acidic residues); that stretch reads PRRDADDVEKAQ. Residues 986-1010 adopt a coiled-coil conformation; the sequence is VLLTVKEEKEHQEAKMKEYQAREST.

Its function is as follows. Probable substrate-recognition component of a SCF (SKP1-CUL1-F-box protein)-type E3 ubiquitin ligase complex which mediates the ubiquitination and subsequent proteasomal degradation of target proteins. Overexpression is leading to degradation of CBX5 and CBX1. The chain is F-box/WD repeat-containing protein 10 (FBXW10) from Homo sapiens (Human).